A 217-amino-acid polypeptide reads, in one-letter code: Ribose-5-phosphate isomerase A (217 aa).

Substrate-binding positions include 28–31 (TGST), 81–84 (DGAD), and 94–97 (KGGG). Glu103 serves as the catalytic Proton acceptor. Lys121 provides a ligand contact to substrate.

The protein belongs to the ribose 5-phosphate isomerase family. As to quaternary structure, homodimer.

It carries out the reaction aldehydo-D-ribose 5-phosphate = D-ribulose 5-phosphate. It participates in carbohydrate degradation; pentose phosphate pathway; D-ribose 5-phosphate from D-ribulose 5-phosphate (non-oxidative stage): step 1/1. Catalyzes the reversible conversion of ribose-5-phosphate to ribulose 5-phosphate. This Aeromonas hydrophila subsp. hydrophila (strain ATCC 7966 / DSM 30187 / BCRC 13018 / CCUG 14551 / JCM 1027 / KCTC 2358 / NCIMB 9240 / NCTC 8049) protein is Ribose-5-phosphate isomerase A.